The primary structure comprises 120 residues: Non-specific lipid-transfer protein (120 aa).

The first 26 residues, 1-26 (MASSMSLKLACVVVLCMVVGAPLAQG), serve as a signal peptide directing secretion. 3 disulfide bridges follow: Cys40–Cys56, Cys57–Cys102, and Cys77–Cys116.

This sequence belongs to the plant LTP family.

Functionally, plant non-specific lipid-transfer proteins transfer phospholipids as well as galactolipids across membranes. May play a role in wax or cutin deposition in the cell walls of expanding epidermal cells and certain secretory tissues. The protein is Non-specific lipid-transfer protein of Gossypium hirsutum (Upland cotton).